A 224-amino-acid polypeptide reads, in one-letter code: Ribonuclease 3 (224 aa).

In terms of domain architecture, RNase III spans 5-127; the sequence is LERLCRRLNY…ILAAIYLDGG (123 aa). Position 40 (Glu-40) interacts with Mg(2+). Asp-44 is a catalytic residue. Residues Asp-113 and Glu-116 each coordinate Mg(2+). Glu-116 is an active-site residue. Positions 154–224 constitute a DRBM domain; it reads DAKTQLQEFL…AKAMLEQLQG (71 aa).

It belongs to the ribonuclease III family. In terms of assembly, homodimer. Mg(2+) is required as a cofactor.

The protein resides in the cytoplasm. The enzyme catalyses Endonucleolytic cleavage to 5'-phosphomonoester.. Its function is as follows. Digests double-stranded RNA. Involved in the processing of primary rRNA transcript to yield the immediate precursors to the large and small rRNAs (23S and 16S). Processes some mRNAs, and tRNAs when they are encoded in the rRNA operon. Processes pre-crRNA and tracrRNA of type II CRISPR loci if present in the organism. This Legionella pneumophila subsp. pneumophila (strain Philadelphia 1 / ATCC 33152 / DSM 7513) protein is Ribonuclease 3.